Reading from the N-terminus, the 227-residue chain is PKHD-type hydroxylase M446_1130 (227 aa).

One can recognise a Fe2OG dioxygenase domain in the interval Gln78–Ser178. Positions 96, 98, and 159 each coordinate Fe cation. Position 169 (Arg169) interacts with 2-oxoglutarate.

Fe(2+) is required as a cofactor. L-ascorbate serves as cofactor.

In Methylobacterium sp. (strain 4-46), this protein is PKHD-type hydroxylase M446_1130.